The following is a 1372-amino-acid chain: DNA-directed RNA polymerase subunit beta (1372 aa).

It belongs to the RNA polymerase beta chain family. The RNAP catalytic core consists of 2 alpha, 1 beta, 1 beta' and 1 omega subunit. When a sigma factor is associated with the core the holoenzyme is formed, which can initiate transcription.

It catalyses the reaction RNA(n) + a ribonucleoside 5'-triphosphate = RNA(n+1) + diphosphate. Functionally, DNA-dependent RNA polymerase catalyzes the transcription of DNA into RNA using the four ribonucleoside triphosphates as substrates. The protein is DNA-directed RNA polymerase subunit beta of Bradyrhizobium sp. (strain ORS 278).